The primary structure comprises 322 residues: UDP-N-acetylenolpyruvoylglucosamine reductase (322 aa).

One can recognise an FAD-binding PCMH-type domain in the interval 36-202 (RAGGPAQVLF…TSVLFEGVPG (167 aa)). Arg182 is an active-site residue. The active-site Proton donor is Ser231. Glu301 is an active-site residue.

It belongs to the MurB family. FAD serves as cofactor.

The protein resides in the cytoplasm. The catalysed reaction is UDP-N-acetyl-alpha-D-muramate + NADP(+) = UDP-N-acetyl-3-O-(1-carboxyvinyl)-alpha-D-glucosamine + NADPH + H(+). Its pathway is cell wall biogenesis; peptidoglycan biosynthesis. Functionally, cell wall formation. The protein is UDP-N-acetylenolpyruvoylglucosamine reductase of Brucella melitensis biotype 2 (strain ATCC 23457).